We begin with the raw amino-acid sequence, 688 residues long: DNA topoisomerase 1 (688 aa).

The Toprim domain occupies 3-113 (ENLVIVESPA…TENRVVFNEI (111 aa)). The Mg(2+) site is built by Glu9 and Asp82. The Topo IA-type catalytic domain maps to 129-556 (EMELVDAQQA…FYSSFKQDVE (428 aa)). The segment at 163–168 (SAGRVQ) is interaction with DNA. The active-site O-(5'-phospho-DNA)-tyrosine intermediate is Tyr298. The disordered stretch occupies residues 322–349 (YGNDYTSNRKSKGQGDQDAHEAIRPSST). Positions 334-344 (GQGDQDAHEAI) are enriched in basic and acidic residues. 3 consecutive C4-type zinc fingers follow at residues 576-602 (CEVC…FPDC), 616-644 (CPKC…YPEC), and 657-680 (CPKC…CSNC).

This sequence belongs to the type IA topoisomerase family. Monomer. It depends on Mg(2+) as a cofactor.

It catalyses the reaction ATP-independent breakage of single-stranded DNA, followed by passage and rejoining.. Functionally, releases the supercoiling and torsional tension of DNA, which is introduced during the DNA replication and transcription, by transiently cleaving and rejoining one strand of the DNA duplex. Introduces a single-strand break via transesterification at a target site in duplex DNA. The scissile phosphodiester is attacked by the catalytic tyrosine of the enzyme, resulting in the formation of a DNA-(5'-phosphotyrosyl)-enzyme intermediate and the expulsion of a 3'-OH DNA strand. The free DNA strand then undergoes passage around the unbroken strand, thus removing DNA supercoils. Finally, in the religation step, the DNA 3'-OH attacks the covalent intermediate to expel the active-site tyrosine and restore the DNA phosphodiester backbone. The chain is DNA topoisomerase 1 from Staphylococcus saprophyticus subsp. saprophyticus (strain ATCC 15305 / DSM 20229 / NCIMB 8711 / NCTC 7292 / S-41).